We begin with the raw amino-acid sequence, 197 residues long: ATP-dependent Clp protease proteolytic subunit 1 (197 aa).

The Nucleophile role is filled by S96. The active site involves H121.

The protein belongs to the peptidase S14 family. In terms of assembly, fourteen ClpP subunits assemble into 2 heptameric rings which stack back to back to give a disk-like structure with a central cavity, resembling the structure of eukaryotic proteasomes.

It localises to the cytoplasm. It catalyses the reaction Hydrolysis of proteins to small peptides in the presence of ATP and magnesium. alpha-casein is the usual test substrate. In the absence of ATP, only oligopeptides shorter than five residues are hydrolyzed (such as succinyl-Leu-Tyr-|-NHMec, and Leu-Tyr-Leu-|-Tyr-Trp, in which cleavage of the -Tyr-|-Leu- and -Tyr-|-Trp bonds also occurs).. In terms of biological role, cleaves peptides in various proteins in a process that requires ATP hydrolysis. Has a chymotrypsin-like activity. Plays a major role in the degradation of misfolded proteins. This chain is ATP-dependent Clp protease proteolytic subunit 1, found in Synechococcus sp. (strain ATCC 27144 / PCC 6301 / SAUG 1402/1) (Anacystis nidulans).